Consider the following 555-residue polypeptide: MKTDIEIARSIELVKIKQVARETGIPVEHISNYGRYIAKVDESQINEEKVQQSNLILVTAITPTKAGIGKTTVSIGLALGLNKIGKKTIVALREPSLGPCFGMKGGAAGGGYAQVLPMDKINLHFTGDFHAITSAHNMISALLDNYLYQNRDNGFGLKEVLWRRVLDVNDRSLRYIVTGLGPKTNGITQESGFDITPASEIMAILCLAKDEKDLRRRIENILLGFTYDNKPFTVKDLGVAGAITVLLKDALSPNLVQTTEHTAAFVHGGPFANIAHGCNSILATKMAMTFSDYTITEAGFGADLGAEKFYDIKCRKAGVTPKLTVLVVTARALKMHGGVSQDKIKEPNLEALKQGVANMDKHLRNLRYFGQTVVVAFNRYGDDSEEEVDYIRTHCEKKGVGFAVNNAFTDGGEGAVELAELVVKTIEEQPSEPLQYAYDDEDSVETKISKVACNLYGASIITYSAAARKKLKHIVELGYGNFPICIAKTQYSFSTDPKIYGAVDNFEFHVQDIVMNAGAEMLVVIAGEIMRMPGLPKEPQALHIDIVNGEIEGLS.

64–71 (TKAGIGKT) contacts ATP.

Belongs to the formate--tetrahydrofolate ligase family.

It catalyses the reaction (6S)-5,6,7,8-tetrahydrofolate + formate + ATP = (6R)-10-formyltetrahydrofolate + ADP + phosphate. It participates in one-carbon metabolism; tetrahydrofolate interconversion. This is Formate--tetrahydrofolate ligase from Phocaeicola vulgatus (strain ATCC 8482 / DSM 1447 / JCM 5826 / CCUG 4940 / NBRC 14291 / NCTC 11154) (Bacteroides vulgatus).